A 592-amino-acid chain; its full sequence is Aspartate--tRNA(Asp/Asn) ligase (592 aa).

Glu172 serves as a coordination point for L-aspartate. The interval 196–199 is aspartate; it reads QLFK. Residue Arg218 participates in L-aspartate binding. Residues 218–220 and Gln227 each bind ATP; that span reads RDE. His450 is an L-aspartate binding site. Glu484 lines the ATP pocket. Arg491 serves as a coordination point for L-aspartate. 536-539 contributes to the ATP binding site; that stretch reads GLDR.

Belongs to the class-II aminoacyl-tRNA synthetase family. Type 1 subfamily. Homodimer.

Its subcellular location is the cytoplasm. It catalyses the reaction tRNA(Asx) + L-aspartate + ATP = L-aspartyl-tRNA(Asx) + AMP + diphosphate. Functionally, aspartyl-tRNA synthetase with relaxed tRNA specificity since it is able to aspartylate not only its cognate tRNA(Asp) but also tRNA(Asn). Reaction proceeds in two steps: L-aspartate is first activated by ATP to form Asp-AMP and then transferred to the acceptor end of tRNA(Asp/Asn). The protein is Aspartate--tRNA(Asp/Asn) ligase of Thioalkalivibrio sulfidiphilus (strain HL-EbGR7).